The chain runs to 834 residues: Glycerol-3-phosphate acyltransferase (834 aa).

The HXXXXD motif motif lies at Cys-309–Ile-314.

Belongs to the GPAT/DAPAT family.

Its subcellular location is the cell inner membrane. It carries out the reaction sn-glycerol 3-phosphate + an acyl-CoA = a 1-acyl-sn-glycero-3-phosphate + CoA. Its pathway is phospholipid metabolism; CDP-diacylglycerol biosynthesis; CDP-diacylglycerol from sn-glycerol 3-phosphate: step 1/3. This Pseudomonas fluorescens (strain Pf0-1) protein is Glycerol-3-phosphate acyltransferase.